The following is a 1704-amino-acid chain: Phospholipid-transporting ATPase ABCA3 (1704 aa).

The N-linked (GlcNAc...) asparagine glycan is linked to N14. Residues 22 to 42 traverse the membrane as a helical segment; it reads VLVTVLELFLPLLFSGILIWL. 3 N-linked (GlcNAc...) asparagine glycosylation sites follow: N53, N124, and N140. 6 helical membrane-spanning segments follow: residues 261 to 283, 307 to 327, 344 to 364, 373 to 393, 405 to 425, and 447 to 467; these read YQLP…RAVV, AWFL…TLLF, SLVL…SFMV, MAAA…FFVA, LCSC…IGKF, and FCFG…GLVT. The ABC transporter 1 domain maps to 530–763; the sequence is IKIKHLSKVF…YGAGYHMTLV (234 aa). Residue 566–573 participates in ATP binding; the sequence is GHNGAGKT. N-linked (GlcNAc...) asparagine glycosylation is found at N620 and N783. 7 consecutive transmembrane segments (helical) span residues 925–945, 1100–1120, 1144–1164, 1183–1203, 1213–1233, 1245–1265, and 1306–1326; these read MVAA…LAIN, IALN…ILAV, SALL…LVVF, LLLL…NFFF, LTIF…IMRI, LDHV…SSFY, and FVAS…LIET. One can recognise an ABC transporter 2 domain in the interval 1381-1614; the sequence is LIIKELSKVY…FGSGYSLRAK (234 aa). 1416–1423 lines the ATP pocket; it reads GFNGAGKT.

This sequence belongs to the ABC transporter superfamily. ABCA family. As to quaternary structure, homooligomer; disulfide-linked. Post-translationally, N-glycosylated. Localization at intracellular vesicles is accompanied by processing of oligosaccharide from high mannose type to complex type. N-linked glycosylation at Asn-124 and Asn-140 is required for stability and efficient anterograde trafficking and prevents from proteasomal degradation. In terms of processing, proteolytically cleaved by CTSL and to a lower extent by CTSB within multivesicular bodies (MVB) and lamellar bodies (LB) leading to a mature form of 150 kDa. As to expression, expressed in brain, pancreas, skeletal muscle and heart. Highly expressed in the lung in an AT2-cell-specific manner. Weakly expressed in placenta, kidney and liver. Also expressed in medullary thyroid carcinoma cells (MTC) and in C-cell carcinoma.

The protein localises to the endosome. Its subcellular location is the multivesicular body membrane. It is found in the cytoplasmic vesicle membrane. It localises to the late endosome membrane. The protein resides in the lysosome membrane. The enzyme catalyses ATP + H2O + xenobioticSide 1 = ADP + phosphate + xenobioticSide 2.. It catalyses the reaction a 1,2-diacyl-sn-glycero-3-phosphocholine(in) + ATP + H2O = a 1,2-diacyl-sn-glycero-3-phosphocholine(out) + ADP + phosphate + H(+). The catalysed reaction is ATP + H2O + phospholipidSide 1 = ADP + phosphate + phospholipidSide 2.. It carries out the reaction 1,2-dihexadecanoyl-sn-glycero-3-phosphocholine(in) + ATP + H2O = 1,2-dihexadecanoyl-sn-glycero-3-phosphocholine(out) + ADP + phosphate + H(+). The enzyme catalyses cholesterol(in) + ATP + H2O = cholesterol(out) + ADP + phosphate + H(+). It catalyses the reaction a 1,2-diacyl-sn-glycero-3-phospho-(1'-sn-glycerol)(in) + ATP + H2O = a 1,2-diacyl-sn-glycero-3-phospho-(1'-sn-glycerol)(out) + ADP + phosphate + H(+). The ATP-dependent phosphatidylcholine transport is competitively inhibited by miltefosine. Its function is as follows. Catalyzes the ATP-dependent transport of phospholipids such as phosphatidylcholine and phosphoglycerol from the cytoplasm into the lumen side of lamellar bodies, in turn participates in the lamellar bodies biogenesis and homeostasis of pulmonary surfactant. Transports preferentially phosphatidylcholine containing short acyl chains. In addition plays a role as an efflux transporter of miltefosine across macrophage membranes and free cholesterol (FC) through intralumenal vesicles by removing FC from the cell as a component of surfactant and protects cells from free cholesterol toxicity. This Homo sapiens (Human) protein is Phospholipid-transporting ATPase ABCA3.